The following is a 612-amino-acid chain: MMQVLLVTISLAVFPYQGSSIILESGNVNDYEVVYPQKITALPEEAVQQPEQKYEDTMQYEFEVNGEPVVLHLEKNKDLFSEDYSETRYSPDGRETTTKPPVQDHCYYHGRIQNDAYSSASISACNGLKGHFKLQGETYLIEPLKIPDSEAHAVYKYENIEKEDEAPKMCGVTQTNWESDEPIKKASQLVATSAKRKFHKTFIELVIVVDHRVVKKYDSAATNTKIYEIVNTVNEIFIPLNIRLTLIGVEFWCNRDLINVTSSADDTLDSFGEWRGSDLLNRKRHDNAQLFTDMKFDLSTLGITFLDGMCQAYRSVGIVQEHGNKNFKTAVIMAHELGHNLGMYHDRKNCICNDSSCIMSAVLSSQPSKLFSNCSNHDYRRYLTTYKPKCILNPPLRKDIASPPICGNEIWEEGEECDCGSPKDCQNPCCDAATCKLTPGAECGNGLCCEKCKIKTAGTVCRRARDECDVPEHCTGQSAECPADGFHANGQPCQNNNGYCYNGDCPIMTKQCISLFGSRATVAEDSCFQENQKGSYYGYCRKENGRKIPCAPQDIKCGRLYCLDNSPGNKNPCKMHYRCRDQHKGMVEPGTKCEDGKVCNNKRQCVDVNTAY.

The N-terminal stretch at 1 to 20 (MMQVLLVTISLAVFPYQGSS) is a signal peptide. A propeptide spans 21–193 (IILESGNVND…KKASQLVATS (173 aa)) (or 194). Residues 201 to 395 (TFIELVIVVD…YKPKCILNPP (195 aa)) enclose the Peptidase M12B domain. Glutamate 204 contributes to the Ca(2+) binding site. A glycan (N-linked (GlcNAc...) asparagine) is linked at asparagine 259. Aspartate 286 contributes to the Ca(2+) binding site. Cystine bridges form between cysteine 310–cysteine 390, cysteine 350–cysteine 374, and cysteine 352–cysteine 357. Histidine 335 serves as a coordination point for Zn(2+). Glutamate 336 is a catalytic residue. Positions 339 and 345 each coordinate Zn(2+). 2 N-linked (GlcNAc...) asparagine glycosylation sites follow: asparagine 353 and asparagine 373. Ca(2+) contacts are provided by cysteine 390, asparagine 393, isoleucine 405, asparagine 408, glutamate 412, glutamate 415, and aspartate 418. The region spanning 403–489 (PPICGNEIWE…ECPADGFHAN (87 aa)) is the Disintegrin domain. Cysteine 461 and cysteine 481 are disulfide-bonded. The short motif at 467-469 (ECD) is the D/ECD-tripeptide element.

This sequence belongs to the venom metalloproteinase (M12B) family. P-III subfamily. P-IIId sub-subfamily. Heterotrimer; disulfide-linked. The heterotrimer consists of 1 heavy chain and 2 light chains (lectins): LC1 and LC2 (AC Q7T045 and AC Q696W1). It depends on Zn(2+) as a cofactor. N-glycosylated. Contains 8.0% of hexoses, 2.5% of hexosamines and 2.5% of sialic acids. Expressed by the venom gland.

The protein resides in the secreted. The enzyme catalyses Specifically activates several components of the blood clotting system, including coagulation factor X, coagulation factor IX and protein C by cleavage of Arg-|-Xaa bonds. Has no action on insulin B chain.. With respect to regulation, calcium is required for the activity of the heterotrimer. In terms of biological role, catalytic subunit of blood coagulation factor X-activating enzyme. Activates coagulation factor X (F10) by cleaving the Arg(234)-Ile(235) bond, activates coagulation factor IX (F9) by cleaving the Arg(226)-Val(227) bond and is also able to activate protein C (PROC). The polypeptide is Coagulation factor X-activating enzyme heavy chain (Macrovipera lebetinus (Levantine viper)).